Reading from the N-terminus, the 128-residue chain is uncharacterized protein (128 aa).

Residues 24-43 (KRTQNNTEQASRAINSPLQS) form a disordered region. Residues 26-43 (TQNNTEQASRAINSPLQS) show a composition bias toward polar residues.

This is an uncharacterized protein from Homo sapiens (Human).